Consider the following 436-residue polypeptide: UPF0761 membrane protein Bxeno_A3061 (436 aa).

Helical transmembrane passes span 42–62, 96–116, 136–156, 180–200, 210–230, and 241–261; these read LVPL…FASF, GLTT…MMTV, ILVY…SLSI, ALAG…YVYL, AVIG…GFGY, and VYGA…CWFI.

Belongs to the UPF0761 family.

It localises to the cell inner membrane. The chain is UPF0761 membrane protein Bxeno_A3061 from Paraburkholderia xenovorans (strain LB400).